Reading from the N-terminus, the 133-residue chain is ATP synthase epsilon chain, chloroplastic (133 aa).

This sequence belongs to the ATPase epsilon chain family. F-type ATPases have 2 components, CF(1) - the catalytic core - and CF(0) - the membrane proton channel. CF(1) has five subunits: alpha(3), beta(3), gamma(1), delta(1), epsilon(1). CF(0) has three main subunits: a, b and c.

The protein resides in the plastid. It localises to the chloroplast thylakoid membrane. Produces ATP from ADP in the presence of a proton gradient across the membrane. This is ATP synthase epsilon chain, chloroplastic from Lotus japonicus (Lotus corniculatus var. japonicus).